Here is a 367-residue protein sequence, read N- to C-terminus: Cyclic AMP-responsive element-binding protein 3-like protein 4 (367 aa).

Residues 1-52 are required for transcriptional activation; it reads MELGCPELLEPPEDIFSTGSFLELGFNGPPSKVPGLQKSESDDFLNLFIDPN. Topologically, residues 1-267 are cytoplasmic; that stretch reads MELGCPELLE…QTSSRAAQTS (267 aa). The interval 58–81 is disordered; that stretch reads ETSPGSDSGVSEDPGSPAPQAPSS. Residues 189 to 252 enclose the bZIP domain; that stretch reads ILKKIRRKIR…ISLVAQVHQL (64 aa). The interval 191-230 is basic motif; it reads KKIRRKIRNKQSAQDSRRRKKEYIDGLESRVAACSEQNQK. The interval 231-252 is leucine-zipper; it reads LQRKVQELERQNISLVAQVHQL. Residues 268 to 288 traverse the membrane as a helical; Signal-anchor for type II membrane protein segment; sequence TCVLILLFSLALIILPSFSPF. The Lumenal portion of the chain corresponds to 289–367; the sequence is QSQPEARSEG…IRGMVHADEM (79 aa). N-linked (GlcNAc...) asparagine glycosylation occurs at Asn-338.

The protein belongs to the bZIP family. ATF subfamily. Binds DNA as a dimer. Forms a heterodimer with CREM isoform Delta. In terms of processing, controlled by regulated intramembrane proteolysis (RIP). Following ER stress a fragment containing the cytoplasmic transcription factor domain is released by proteolysis. The cleavage seems to be performed sequentially by site-1 and site-2 proteases (PS1 and PS2). PS1 cleavage may be suppressed by a determinant in the C-terminal region.

The protein localises to the endoplasmic reticulum membrane. It localises to the nucleus. Its function is as follows. Transcriptional activator that may play a role in the unfolded protein response. Binds to the UPR element (UPRE) but not to CRE element. Preferentially binds DNA with to the consensus sequence 5'-T[GT]ACGT[GA][GT]-3' and has transcriptional activation activity from UPRE. Binds to NF-kappa-B site and has transcriptional activation activity from NF-kappa-B-containing regulatory elements. Increases the binding of CREM isoform Delta with CRE. The CREM isoform Delta-CREB3L4 heterodimer functions through CRE but not through UPRE and may recruit HIRA to CRE to regulate histone exchange. In Rattus norvegicus (Rat), this protein is Cyclic AMP-responsive element-binding protein 3-like protein 4 (Creb3l4).